The primary structure comprises 712 residues: Phosphoribosylformylglycinamidine synthase subunit PurL (712 aa).

The active site involves H32. Residue Y35 participates in ATP binding. A Mg(2+)-binding site is contributed by E76. Substrate is bound by residues S77–H80 and R99. The Proton acceptor role is filled by H78. Residue D100 participates in Mg(2+) binding. Substrate is bound at residue Q223. D251 is a binding site for Mg(2+). E295 to Q297 contributes to the substrate binding site. 2 residues coordinate ATP: D470 and G507. Mg(2+) is bound at residue N508. S510 serves as a coordination point for substrate.

This sequence belongs to the FGAMS family. As to quaternary structure, monomer. Part of the FGAM synthase complex composed of 1 PurL, 1 PurQ and 2 PurS subunits.

Its subcellular location is the cytoplasm. The catalysed reaction is N(2)-formyl-N(1)-(5-phospho-beta-D-ribosyl)glycinamide + L-glutamine + ATP + H2O = 2-formamido-N(1)-(5-O-phospho-beta-D-ribosyl)acetamidine + L-glutamate + ADP + phosphate + H(+). It functions in the pathway purine metabolism; IMP biosynthesis via de novo pathway; 5-amino-1-(5-phospho-D-ribosyl)imidazole from N(2)-formyl-N(1)-(5-phospho-D-ribosyl)glycinamide: step 1/2. Its function is as follows. Part of the phosphoribosylformylglycinamidine synthase complex involved in the purines biosynthetic pathway. Catalyzes the ATP-dependent conversion of formylglycinamide ribonucleotide (FGAR) and glutamine to yield formylglycinamidine ribonucleotide (FGAM) and glutamate. The FGAM synthase complex is composed of three subunits. PurQ produces an ammonia molecule by converting glutamine to glutamate. PurL transfers the ammonia molecule to FGAR to form FGAM in an ATP-dependent manner. PurS interacts with PurQ and PurL and is thought to assist in the transfer of the ammonia molecule from PurQ to PurL. The sequence is that of Phosphoribosylformylglycinamidine synthase subunit PurL from Thermococcus gammatolerans (strain DSM 15229 / JCM 11827 / EJ3).